Reading from the N-terminus, the 322-residue chain is UDP-N-acetylenolpyruvoylglucosamine reductase (322 aa).

The FAD-binding PCMH-type domain maps to 36-202 (RAGGPAQVLF…TSVLFEGVPG (167 aa)). The active site involves arginine 182. The Proton donor role is filled by serine 231. Residue glutamate 301 is part of the active site.

Belongs to the MurB family. The cofactor is FAD.

Its subcellular location is the cytoplasm. It carries out the reaction UDP-N-acetyl-alpha-D-muramate + NADP(+) = UDP-N-acetyl-3-O-(1-carboxyvinyl)-alpha-D-glucosamine + NADPH + H(+). The protein operates within cell wall biogenesis; peptidoglycan biosynthesis. Functionally, cell wall formation. This Brucella melitensis biotype 2 (strain ATCC 23457) protein is UDP-N-acetylenolpyruvoylglucosamine reductase.